The primary structure comprises 399 residues: Tryptophan synthase beta chain (399 aa).

An N6-(pyridoxal phosphate)lysine modification is found at Lys86.

It belongs to the TrpB family. As to quaternary structure, tetramer of two alpha and two beta chains. Requires pyridoxal 5'-phosphate as cofactor.

It carries out the reaction (1S,2R)-1-C-(indol-3-yl)glycerol 3-phosphate + L-serine = D-glyceraldehyde 3-phosphate + L-tryptophan + H2O. The protein operates within amino-acid biosynthesis; L-tryptophan biosynthesis; L-tryptophan from chorismate: step 5/5. In terms of biological role, the beta subunit is responsible for the synthesis of L-tryptophan from indole and L-serine. This Buchnera aphidicola subsp. Schizaphis graminum (strain Sg) protein is Tryptophan synthase beta chain (trpB).